An 856-amino-acid chain; its full sequence is Leucine--tRNA ligase (856 aa).

Residues 53 to 63 carry the 'HIGH' region motif; it reads PYPSGNLHMGH. A 'KMSKS' region motif is present at residues 622-626; it reads KMSKS. Lys625 contributes to the ATP binding site.

The protein belongs to the class-I aminoacyl-tRNA synthetase family.

Its subcellular location is the cytoplasm. The catalysed reaction is tRNA(Leu) + L-leucine + ATP = L-leucyl-tRNA(Leu) + AMP + diphosphate. This is Leucine--tRNA ligase from Prochlorococcus marinus (strain MIT 9215).